The sequence spans 255 residues: Uridylate kinase (255 aa).

The interval 1–21 (MSAAAAGRGERLNHAGNPGHR) is disordered. ATP is bound at residue 30–33 (KLGG). G71 serves as a coordination point for UMP. Residues G72 and R76 each coordinate ATP. UMP is bound by residues D91 and 152–159 (MGLPYFST). Positions 185 and 188 each coordinate ATP.

Belongs to the UMP kinase family. As to quaternary structure, homohexamer.

It is found in the cytoplasm. The catalysed reaction is UMP + ATP = UDP + ADP. The protein operates within pyrimidine metabolism; CTP biosynthesis via de novo pathway; UDP from UMP (UMPK route): step 1/1. Its activity is regulated as follows. Inhibited by UTP. In terms of biological role, catalyzes the reversible phosphorylation of UMP to UDP. The polypeptide is Uridylate kinase (Mycobacterium leprae (strain TN)).